The chain runs to 142 residues: UPF0102 protein PsycPRwf_0497 (142 aa).

This sequence belongs to the UPF0102 family.

This is UPF0102 protein PsycPRwf_0497 from Psychrobacter sp. (strain PRwf-1).